Here is a 104-residue protein sequence, read N- to C-terminus: Large ribosomal subunit protein uL24 (104 aa).

Belongs to the universal ribosomal protein uL24 family. Part of the 50S ribosomal subunit.

In terms of biological role, one of two assembly initiator proteins, it binds directly to the 5'-end of the 23S rRNA, where it nucleates assembly of the 50S subunit. One of the proteins that surrounds the polypeptide exit tunnel on the outside of the subunit. The polypeptide is Large ribosomal subunit protein uL24 (Halothermothrix orenii (strain H 168 / OCM 544 / DSM 9562)).